A 439-amino-acid polypeptide reads, in one-letter code: RNA polymerase II-associated protein RBA50 (439 aa).

Disordered stretches follow at residues 1–35 (MDLL…GFPE) and 49–79 (LREK…SEAK). Residues 15-30 (SVESNDNGTLSTNNCG) are compositionally biased toward polar residues.

It belongs to the RPAP1 family.

The protein resides in the cytoplasm. Its function is as follows. Forms an interface between the RNA polymerase II enzyme and chaperone/scaffolding proteins, suggesting that it is required to connect RNA polymerase II to regulators of protein complex formation. The sequence is that of RNA polymerase II-associated protein RBA50 (RBA50) from Saccharomyces cerevisiae (strain ATCC 204508 / S288c) (Baker's yeast).